Reading from the N-terminus, the 109-residue chain is MAMTDTEFHQLADDMFQAIESAIETAIDEQDADVDIDASGNVLQLEFVDGSKIVINKQEPLHEIWVATRFGGYHFGFVEGKWLDGRNGGEFMPFVQDSILRQGGIKLSF.

It belongs to the frataxin family.

Functionally, involved in iron-sulfur (Fe-S) cluster assembly. May act as a regulator of Fe-S biogenesis. The sequence is that of Iron-sulfur cluster assembly protein CyaY from Shewanella putrefaciens (strain CN-32 / ATCC BAA-453).